A 90-amino-acid chain; its full sequence is Probable Fe(2+)-trafficking protein (90 aa).

This sequence belongs to the Fe(2+)-trafficking protein family.

Functionally, could be a mediator in iron transactions between iron acquisition and iron-requiring processes, such as synthesis and/or repair of Fe-S clusters in biosynthetic enzymes. In Pasteurella multocida (strain Pm70), this protein is Probable Fe(2+)-trafficking protein.